Reading from the N-terminus, the 262-residue chain is Shikimate dehydrogenase (NADP(+)) (262 aa).

Residues 14–16 and Thr-60 contribute to the shikimate site; that span reads SAS. Residue Lys-64 is the Proton acceptor of the active site. 2 residues coordinate shikimate: Asn-85 and Asp-100. Residues 121–125, 145–150, and Phe-203 each bind NADP(+); these read GAGGA and NRTAER. Position 205 (Tyr-205) interacts with shikimate. Gly-227 lines the NADP(+) pocket.

The protein belongs to the shikimate dehydrogenase family. Homodimer.

The catalysed reaction is shikimate + NADP(+) = 3-dehydroshikimate + NADPH + H(+). It functions in the pathway metabolic intermediate biosynthesis; chorismate biosynthesis; chorismate from D-erythrose 4-phosphate and phosphoenolpyruvate: step 4/7. Functionally, involved in the biosynthesis of the chorismate, which leads to the biosynthesis of aromatic amino acids. Catalyzes the reversible NADPH linked reduction of 3-dehydroshikimate (DHSA) to yield shikimate (SA). This Pyrobaculum aerophilum (strain ATCC 51768 / DSM 7523 / JCM 9630 / CIP 104966 / NBRC 100827 / IM2) protein is Shikimate dehydrogenase (NADP(+)).